The sequence spans 951 residues: Coiled-coil and C2 domain-containing protein 1A (951 aa).

Disordered stretches follow at residues Cys-80–Thr-139, Ala-185–Asp-266, Val-306–Arg-346, and Asn-437–Gln-491. A compositionally biased stretch (acidic residues) spans Pro-84–Leu-104. 3 positions are modified to phosphothreonine: Thr-92, Thr-204, and Thr-206. The segment covering Pro-201–Ala-210 has biased composition (low complexity). Ser-208 is subject to Phosphoserine; by CDK1. Phosphoserine occurs at positions 253 and 324. Over residues Leu-311 to Ala-333 the composition is skewed to pro residues. Positions Arg-346–His-392 form a coiled coil. Phosphoserine is present on Ser-455. The span at Ser-475–Thr-488 shows a compositional bias: low complexity. A coiled-coil region spans residues Lys-484–Val-517. One can recognise a C2 domain in the interval Arg-637–Leu-771. Positions Thr-818–Ser-841 are disordered.

Belongs to the CC2D1 family. Post-translationally, phosphorylation on Ser-208 by CDK1 promotes spindle pole localization and association with SCC1/RAD21.

The protein localises to the cytoplasm. It localises to the nucleus. Its subcellular location is the cytoskeleton. The protein resides in the microtubule organizing center. It is found in the centrosome. Transcription factor that binds specifically to the DRE (dual repressor element) and represses HTR1A gene transcription in neuronal cells. The combination of calcium and ATP specifically inactivates the binding with FRE. May play a role in the altered regulation of HTR1A associated with anxiety and major depression. Mediates HDAC-independent repression of HTR1A promoter in neuronal cell. Performs essential function in controlling functional maturation of synapses. Plays distinct roles depending on its localization. When cytoplasmic, acts as a scaffold protein in the PI3K/PDK1/AKT pathway. Repressor of HTR1A when nuclear. In the centrosome, regulates spindle pole localization of the cohesin subunit SCC1/RAD21, thereby mediating centriole cohesion during mitosis. The sequence is that of Coiled-coil and C2 domain-containing protein 1A (CC2D1A) from Homo sapiens (Human).